A 1340-amino-acid chain; its full sequence is DNA-directed RNA polymerase subunit beta (1340 aa).

The protein belongs to the RNA polymerase beta chain family. In terms of assembly, the RNAP catalytic core consists of 2 alpha, 1 beta, 1 beta' and 1 omega subunit. When a sigma factor is associated with the core the holoenzyme is formed, which can initiate transcription.

It catalyses the reaction RNA(n) + a ribonucleoside 5'-triphosphate = RNA(n+1) + diphosphate. In terms of biological role, DNA-dependent RNA polymerase catalyzes the transcription of DNA into RNA using the four ribonucleoside triphosphates as substrates. This is DNA-directed RNA polymerase subunit beta from Baumannia cicadellinicola subsp. Homalodisca coagulata.